The following is a 1012-amino-acid chain: Ubiquitin-activating enzyme E1 1 (1012 aa).

Arg22 is an ATP binding site. The residue at position 264 (Ser264) is a Phosphoserine. Ala437 and Asp463 together coordinate ATP. Mg(2+) contacts are provided by Asp465 and Glu468. ATP is bound by residues Asn471, Arg474, Lys487, Val513, Asp537, and Asn538. Residue Asp537 coordinates Mg(2+). Lys588 participates in a covalent cross-link: Glycyl lysine isopeptide (Lys-Gly) (interchain with G-Cter in ubiquitin). Cys593 (glycyl thioester intermediate) is an active-site residue. Ser903 bears the Phosphoserine mark.

It belongs to the ubiquitin-activating E1 family. As to quaternary structure, monomer. Interacts with the E2 ubiquitin-conjugating enzyme ubc4.

The protein resides in the cytoplasm. The protein localises to the nucleus. It catalyses the reaction ATP + ubiquitin + [E1 ubiquitin-activating enzyme]-L-cysteine = AMP + diphosphate + S-ubiquitinyl-[E1 ubiquitin-activating enzyme]-L-cysteine.. Its pathway is protein modification; protein ubiquitination. Its activity is regulated as follows. Ubiquitin transfer between the E1 ubiquitin-activating enzyme ptr3 and E2 ubiquitin-conjugating enzyme ubc4 is enhanced by the presence of magnesium and ATP, or adenylated ubiquitin. Functionally, E1 ubiquitin-activating enzyme that catalyzes the first step in ubiquitin conjugation to mark cellular proteins for degradation through the ubiquitin-proteasome system. Activates ubiquitin by first adenylating its C-terminal glycine residue with ATP, and thereafter linking this residue to the side chain of a cysteine residue in E1, yielding a ubiquitin-E1 thioester and free AMP. The polypeptide is Ubiquitin-activating enzyme E1 1 (ptr3) (Schizosaccharomyces pombe (strain 972 / ATCC 24843) (Fission yeast)).